The following is a 302-amino-acid chain: Zygote arrest protein 2.S (302 aa).

Disordered stretches follow at residues 15–46 (YGGN…SEPP), 88–117 (VDTG…PTDC), and 138–195 (LPQG…EPNK). The span at 159–178 (LKDRGPSPEEKEPETKEALE) shows a compositional bias: basic and acidic residues. A 3CxxC-type zinc finger spans residues 203–288 (QKYGYFHCKD…QELCGRCKNK (86 aa)).

Belongs to the ZAR1 family. Oocyte-specific.

The protein resides in the cytoplasm. Its subcellular location is the cytoplasmic ribonucleoprotein granule. Functionally, mRNA-binding protein required for maternal mRNA storage, translation and degradation during oocyte maturation. Probably promotes formation of some phase-separated membraneless compartment that stores maternal mRNAs in oocytes: acts by undergoing liquid-liquid phase separation upon binding to maternal mRNAs. Binds to the 3'-UTR of maternal mRNAs, inhibiting their translation. This is Zygote arrest protein 2.S from Xenopus laevis (African clawed frog).